The following is a 254-amino-acid chain: NAD-dependent protein deacetylase 1 (254 aa).

In terms of domain architecture, Deacetylase sirtuin-type spans 5 to 254; the sequence is ASDLRSGVER…GETLGPFVGN (250 aa). 8 residues coordinate NAD(+): A31, T35, F42, R43, Q108, I110, D111, and H128. Residue F42 participates in nicotinamide binding. Residues I110 and D111 each coordinate nicotinamide. The active-site Proton acceptor is H128. Zn(2+) contacts are provided by C136, C139, C160, and C163. The NAD(+) site is built by S201, S202, N226, D243, and I244.

The protein belongs to the sirtuin family. Class U subfamily. The cofactor is Zn(2+).

Its subcellular location is the cytoplasm. It carries out the reaction N(6)-acetyl-L-lysyl-[protein] + NAD(+) + H2O = 2''-O-acetyl-ADP-D-ribose + nicotinamide + L-lysyl-[protein]. Its function is as follows. NAD-dependent protein deacetylase which modulates the activities of several enzymes which are inactive in their acetylated form. The protein is NAD-dependent protein deacetylase 1 of Bradyrhizobium diazoefficiens (strain JCM 10833 / BCRC 13528 / IAM 13628 / NBRC 14792 / USDA 110).